A 120-amino-acid polypeptide reads, in one-letter code: NAD(P)H-quinone oxidoreductase subunit 3, chloroplastic (120 aa).

A run of 3 helical transmembrane segments spans residues 7 to 27, 64 to 84, and 88 to 108; these read YDTF…AFSI, MFAL…PWAM, and ILGL…IVGL.

The protein belongs to the complex I subunit 3 family. NDH is composed of at least 16 different subunits, 5 of which are encoded in the nucleus.

The protein resides in the plastid. It localises to the chloroplast thylakoid membrane. The catalysed reaction is a plastoquinone + NADH + (n+1) H(+)(in) = a plastoquinol + NAD(+) + n H(+)(out). The enzyme catalyses a plastoquinone + NADPH + (n+1) H(+)(in) = a plastoquinol + NADP(+) + n H(+)(out). NDH shuttles electrons from NAD(P)H:plastoquinone, via FMN and iron-sulfur (Fe-S) centers, to quinones in the photosynthetic chain and possibly in a chloroplast respiratory chain. The immediate electron acceptor for the enzyme in this species is believed to be plastoquinone. Couples the redox reaction to proton translocation, and thus conserves the redox energy in a proton gradient. The sequence is that of NAD(P)H-quinone oxidoreductase subunit 3, chloroplastic from Cryptomeria japonica (Japanese cedar).